Here is a 204-residue protein sequence, read N- to C-terminus: Recombination protein RecR (204 aa).

A C4-type zinc finger spans residues 63–78; sequence CRICCNVADSELCPIC. The Toprim domain maps to 86 to 181; sequence NKICVVEQPQ…KVTRLARGLP (96 aa).

The protein belongs to the RecR family.

In terms of biological role, may play a role in DNA repair. It seems to be involved in an RecBC-independent recombinational process of DNA repair. It may act with RecF and RecO. The polypeptide is Recombination protein RecR (Dehalococcoides mccartyi (strain ATCC BAA-2100 / JCM 16839 / KCTC 5957 / BAV1)).